Reading from the N-terminus, the 322-residue chain is MIQHLALDALQRHLAGSPLYGWATSLPAQIAARIEEGHGDLARWWSAVQRLPQVPAPKVELAQRFALHSDHDAALQAQVKEALQGLIPWRKGPFDFFGVQVDTEWRSDWKWERVSPHVELRGKRVLDVGCGNGYYQWRMLGAGAESVVGVDPNWLFLCQFLAAKRYLPELPAWHLPLALEDLPEKLEGFDTVFSMGVLYHRRSPIDHLLALKDCLKRGGELVLETLVVEGDASTVLVPEDRYAQMRNVWFLPSVAALELWLRRAGFADARCVDVSLTSVEEQRSTEWMRFQSLPEFLDPQDRSRTVEGLPAPMRATLVARKP.

Carboxy-S-adenosyl-L-methionine-binding positions include lysine 91, tryptophan 105, lysine 110, glycine 129, 179 to 180, methionine 195, tyrosine 199, and arginine 314; that span reads LE.

The protein belongs to the class I-like SAM-binding methyltransferase superfamily. CmoB family. In terms of assembly, homotetramer.

The catalysed reaction is carboxy-S-adenosyl-L-methionine + 5-hydroxyuridine(34) in tRNA = 5-carboxymethoxyuridine(34) in tRNA + S-adenosyl-L-homocysteine + H(+). Its function is as follows. Catalyzes carboxymethyl transfer from carboxy-S-adenosyl-L-methionine (Cx-SAM) to 5-hydroxyuridine (ho5U) to form 5-carboxymethoxyuridine (cmo5U) at position 34 in tRNAs. The chain is tRNA U34 carboxymethyltransferase from Pseudomonas aeruginosa (strain LESB58).